Reading from the N-terminus, the 1131-residue chain is MASATTNQGNEWRFVAPININTTTENTVSCVKFDPHEDLFWIGSSTGKVTSLLPTNHFTRYSAFVVSNISGVHSLEPTESLIFTLSDTMLRATTRQGIPVAKFTSPSMTKMAASCHMPGTSTFIMGGFQEKLIHYDFVKEKEIRTTELKASENAIIIRYNGTNTFTADTRGNVFVKNSKNCETIHTLDCHQDQVLDFDVQGNKLITCGVSMNRLKNMDQFIKVYDLRMYKALSPIGMPYLPQFARFMPSYCERVCVTYQTMYNQPGQTATWSNHPAGVKMFDLNSNGNSAEFPIETSLISAFDFSSNKNFIAVGNHCGIVNVFADRDQPQVNENSKETVFAAPPVQPPLSFAIDDTTQTFGSIPLGFSQEPLVSDWPTELTQIVYRRRKPPTEQTNVKSIHYLSQIKNPRINSKLKRHNIVPYFFEQEELIEASNDHGSKEEAPQEMKRIKVSKLYKKRPLIVNQVPARRGNSQDETQETYTWNIIRHVTMQSTHGMNLVANTLVQVAYSLSPIRSIVLRHICTEDSCITCELHFLFTAFSSKIGDNSGMLTNNLAWALARNGVSLKAGGVLSATQQIIKTVIDDVARTDASGSICSKFDRHLRCIRCRGLQQQESVTDHLLKLNYAPVYQASLCQLIEKSLHIGDDSGEIECEDCKQMSRMECKRKVRELSPVLLIDTNASSNGFVEFWRRQLSLFERKPGGNRSSALGTVPESPSEKKNCRFGTDCRNKKTCKFVHGLVDWPAEQTKLLEDVDLPEWAHYIPSRIAAQLCEGIVRLSDVSDLPDYDEPSAVIYELDAMIHAVGNGENDVNWTHPVTLLRESPVISSSWTLINEQLVSRLHDHEARHIDGRWKLPALLAYKKKNFDVKTSEDIISNDLFLAEENLASNGMTSLAVQSLEELPKEKELVGLDAEFIKIKTDLLEFDGKTVQMRAVGRASCVDSTGERIIFDDHVKLTDDVEVVDYLTKFSGIVKADLCPTTSEKYLTTHKRLLLRMHVLIQRGVTFVGHALHNDFTVLNVHVAESQIIDTVTLMRLGTQRMLSLQFLVKEILGETIQMEAHDSVVDARYALKLYRKYLEIKEQGLLGSEMRRIYTILPCPSPNQTSSPLVVSTTRKTPEDTNPADAAPKSV.

The 376-residue stretch at 489-864 (VTMQSTHGMN…LPALLAYKKK (376 aa)) folds into the USP domain. Positions 909 to 1074 (VGLDAEFIKI…VDARYALKLY (166 aa)) constitute an Exonuclease domain. Residues 1104 to 1115 (QTSSPLVVSTTR) show a composition bias toward polar residues. The segment at 1104–1131 (QTSSPLVVSTTRKTPEDTNPADAAPKSV) is disordered.

The chain is PolyA-specific ribonuclease subunit panl-2 from Caenorhabditis elegans.